A 70-amino-acid polypeptide reads, in one-letter code: ATP synthase subunit c (70 aa).

Transmembrane regions (helical) follow at residues 4–24 and 48–68; these read IAAG…NGML and ISMA…FVLI.

This sequence belongs to the ATPase C chain family. F-type ATPases have 2 components, F(1) - the catalytic core - and F(0) - the membrane proton channel. F(1) has five subunits: alpha(3), beta(3), gamma(1), delta(1), epsilon(1). F(0) has three main subunits: a(1), b(2) and c(10-14). The alpha and beta chains form an alternating ring which encloses part of the gamma chain. F(1) is attached to F(0) by a central stalk formed by the gamma and epsilon chains, while a peripheral stalk is formed by the delta and b chains.

It localises to the cell membrane. Functionally, f(1)F(0) ATP synthase produces ATP from ADP in the presence of a proton or sodium gradient. F-type ATPases consist of two structural domains, F(1) containing the extramembraneous catalytic core and F(0) containing the membrane proton channel, linked together by a central stalk and a peripheral stalk. During catalysis, ATP synthesis in the catalytic domain of F(1) is coupled via a rotary mechanism of the central stalk subunits to proton translocation. Its function is as follows. Key component of the F(0) channel; it plays a direct role in translocation across the membrane. A homomeric c-ring of between 10-14 subunits forms the central stalk rotor element with the F(1) delta and epsilon subunits. This chain is ATP synthase subunit c, found in Oenococcus oeni (strain ATCC BAA-331 / PSU-1).